The chain runs to 148 residues: Putative ankyrin repeat protein RF_1158 (148 aa).

One copy of the ANK repeat lies at 82–115; the sequence is RPTTALGIAIAQGNSEEVIKYLLANGADPKLAFD.

This Rickettsia felis (strain ATCC VR-1525 / URRWXCal2) (Rickettsia azadi) protein is Putative ankyrin repeat protein RF_1158.